We begin with the raw amino-acid sequence, 302 residues long: RELT-like protein 2 (302 aa).

The helical transmembrane segment at 15 to 35 (LYMLFLLVLVFFLMGLVGFMI) threads the bilayer. Disordered regions lie at residues 47-68 (RTSR…DDVN), 135-164 (CSRS…TTVF), 177-212 (RYGL…GQPR), and 247-302 (VPCT…AGGM). A Phosphoserine modification is found at Ser52. Basic and acidic residues-rich tracts occupy residues 148–158 (RSKEGKGRPRP) and 177–188 (RYGLHEHRDGSP). The segment covering 277–294 (QEANGQPTKLDTSGQQDS) has biased composition (polar residues).

Belongs to the RELT family. Interacts with RELT, RELL1, OXSR1, PLSCR1 and TRAF2.

It localises to the cell membrane. In terms of biological role, induces activation of MAPK14/p38 cascade, when overexpressed. Induces apoptosis, when overexpressed. The polypeptide is RELT-like protein 2 (Rell2) (Rattus norvegicus (Rat)).